The chain runs to 1036 residues: Multiple C2 domain and transmembrane region protein 2 (1036 aa).

The C2 1 domain maps to 1–110 (MRNTTKLVVH…YKDDQVYQRF (110 aa)). 2 disordered regions span residues 137–204 (DQTF…PVQK) and 225–246 (RENPHEAQKPMSRGANQLHPQN). The span at 146-155 (PYTSPTQASA) shows a compositional bias: polar residues. The span at 158 to 168 (TEEDTADSETE) shows a compositional bias: acidic residues. The span at 190 to 204 (VEGKKSEEVKEPVQK) shows a compositional bias: basic and acidic residues. C2 domains follow at residues 277–399 (PNAG…PQWY), 440–563 (VHGE…SRWF), and 607–734 (YISD…THSF). Residues aspartate 316, aspartate 364, glutamate 366, and aspartate 372 each contribute to the Ca(2+) site. 2 helical membrane passes run 871-891 (FILVMYPELILPTMFLYMFFI) and 979-999 (LFILFCLAASVVLYAMPFKAI).

Belongs to the MCTP family. Ca(2+) serves as cofactor. As to expression, expressed in the vascular tissues of roots and rosette leaves. Accumulates in roots meristems. Observed in flowers.

The protein resides in the cell membrane. Its function is as follows. May function as a signaling molecule by regulating the trafficking of other regulators. This Arabidopsis thaliana (Mouse-ear cress) protein is Multiple C2 domain and transmembrane region protein 2.